The chain runs to 460 residues: Notoamide biosynthesis cluster transcriptional coactivator notR (460 aa).

In terms of domain architecture, HTH iclR-type spans 74-145; sequence LQDLARQVEI…EPMPNYVSHT (72 aa). The segment at residues 107–126 is a DNA-binding region (H-T-H motif); sequence IQDLADLAGVPDIQLRRVIR. Residues 300–320 form a disordered region; it reads TRDFTPQPESSPRPGSASSRV.

The protein localises to the nucleus. Functionally, transcription factor that probably regulates the expression of the gene cluster that mediates the biosynthesis of notoamide, a fungal indole alkaloid that belongs to a family of natural products containing a characteristic bicyclo[2.2.2]diazaoctane core. The chain is Notoamide biosynthesis cluster transcriptional coactivator notR from Aspergillus sp. (strain MF297-2).